Here is a 340-residue protein sequence, read N- to C-terminus: Holliday junction branch migration complex subunit RuvB (340 aa).

The large ATPase domain (RuvB-L) stretch occupies residues 1–183 (MKRDDLVSPE…FGISFRLDYY (183 aa)). Residues Leu22, Arg23, Gly64, Lys67, Thr68, Thr69, 130-132 (EDF), Arg173, Tyr183, and Arg220 contribute to the ATP site. Residue Thr68 coordinates Mg(2+). The tract at residues 184 to 254 (AVEELTKIIN…VAVHALEMLE (71 aa)) is small ATPAse domain (RuvB-S). Residues 257 to 340 (DRGFDQMDRS…KFEVGQKELF (84 aa)) form a head domain (RuvB-H) region. Positions 312 and 317 each coordinate DNA.

The protein belongs to the RuvB family. As to quaternary structure, homohexamer. Forms an RuvA(8)-RuvB(12)-Holliday junction (HJ) complex. HJ DNA is sandwiched between 2 RuvA tetramers; dsDNA enters through RuvA and exits via RuvB. An RuvB hexamer assembles on each DNA strand where it exits the tetramer. Each RuvB hexamer is contacted by two RuvA subunits (via domain III) on 2 adjacent RuvB subunits; this complex drives branch migration. In the full resolvosome a probable DNA-RuvA(4)-RuvB(12)-RuvC(2) complex forms which resolves the HJ.

Its subcellular location is the cytoplasm. The catalysed reaction is ATP + H2O = ADP + phosphate + H(+). Its function is as follows. The RuvA-RuvB-RuvC complex processes Holliday junction (HJ) DNA during genetic recombination and DNA repair, while the RuvA-RuvB complex plays an important role in the rescue of blocked DNA replication forks via replication fork reversal (RFR). RuvA specifically binds to HJ cruciform DNA, conferring on it an open structure. The RuvB hexamer acts as an ATP-dependent pump, pulling dsDNA into and through the RuvAB complex. RuvB forms 2 homohexamers on either side of HJ DNA bound by 1 or 2 RuvA tetramers; 4 subunits per hexamer contact DNA at a time. Coordinated motions by a converter formed by DNA-disengaged RuvB subunits stimulates ATP hydrolysis and nucleotide exchange. Immobilization of the converter enables RuvB to convert the ATP-contained energy into a lever motion, pulling 2 nucleotides of DNA out of the RuvA tetramer per ATP hydrolyzed, thus driving DNA branch migration. The RuvB motors rotate together with the DNA substrate, which together with the progressing nucleotide cycle form the mechanistic basis for DNA recombination by continuous HJ branch migration. Branch migration allows RuvC to scan DNA until it finds its consensus sequence, where it cleaves and resolves cruciform DNA. This chain is Holliday junction branch migration complex subunit RuvB, found in Syntrophus aciditrophicus (strain SB).